The sequence spans 353 residues: MGCGMSTEDKEGKARNEEIENQLKRDKMMQRNEIKMLLLGAGESGKSTILKQMKLIHEGGYSRDERESFKEIIFSNTVQSMRVILEAMESLELPLEDQRMEYHVQTIFMQPAQIEGDVLPPEVGSAIEAVWKDRGVQDCFKRSREYQLNDSARYYFDNIARIAAPDYMPNDQDVLRSRVKTTGITETTFIIGDLTYRMFDVGGQRSERKKWIHCFENVTTILFLVAISEYDQLLFEDETVNRMQEALTLFDSICNSRWFIKTSIILFLNKIDRFKEKLPVSPMKNYFPDYEGGDDYAAACDYILNRFVSLNQHETKQIYTHFTCATDTTQIRFVMAAVNDIIIQENLRLCGLI.

The segment at 1–25 (MGCGMSTEDKEGKARNEEIENQLKR) is disordered. Glycine 2 is lipidated: N-myristoyl glycine. Cysteine 3 is lipidated: S-palmitoyl cysteine. A compositionally biased stretch (basic and acidic residues) spans 7–25 (TEDKEGKARNEEIENQLKR). The G-alpha domain occupies 32-353 (NEIKMLLLGA…QENLRLCGLI (322 aa)). The segment at 35–48 (KMLLLGAGESGKST) is G1 motif. 14 residues coordinate GTP: glutamate 43, serine 44, glycine 45, lysine 46, serine 47, threonine 48, aspartate 150, leucine 175, threonine 181, glycine 203, asparagine 269, lysine 270, aspartate 272, and alanine 325. Serine 47 lines the Mg(2+) pocket. The tract at residues 173–181 (DVLRSRVKT) is G2 motif. Threonine 181 lines the Mg(2+) pocket. The segment at 196–205 (YRMFDVGGQR) is G3 motif. The tract at residues 265–272 (ILFLNKID) is G4 motif. The G5 motif stretch occupies residues 323–328 (TCATDT).

The protein belongs to the G-alpha family. G(q) subfamily. As to quaternary structure, g proteins are composed of 3 units; alpha, beta and gamma. The alpha chain contains the guanine nucleotide binding site. It depends on Mg(2+) as a cofactor.

Functionally, guanine nucleotide-binding proteins (G proteins) are involved as modulators or transducers in various transmembrane signaling systems. The sequence is that of Guanine nucleotide-binding protein subunit alpha (CTG1) from Colletotrichum trifolii.